The sequence spans 327 residues: MAAVLEVEIGGEAVREAAGEEVDLSELAPEERWRVEHARMHAKHRGHEAMHAEMVLILIATLVVAQLLLVQWKQRHQRSYNMVTLFQMWIVPVYFTVKLHWWRFLGIWFLFSIVTAFVTYKATRKPLVQTTPRLVYKWFLLLYKMSYATGIVGYIAVMFTLFGLNLLFRIKPEDAMDFGISLLFYGLYYGVLGRDFAEMCADYMASTIGFYSASGMPTKHLSDSVCAVCGQQIFVDVNEEGIIENTYRLSCNHVFHEFCIRGWCIVGKKQTCPYCKEKVDLKRMFSNPWERPHVMYGQLLDWLRYLVAWQPVIIGLVQGINYCLGLE.

5 consecutive transmembrane segments (helical) span residues 50 to 70 (MHAE…LLLV), 79 to 96 (SYNM…VYFT), 99 to 119 (LHWW…AFVT), 148 to 168 (ATGI…NLLF), and 173 to 193 (EDAM…GVLG). An RING-type; atypical zinc finger spans residues 226-276 (CAVCGQQIFVDVNEEGIIENTYRLSCNHVFHEFCIRGWCIVGKKQTCPYCK).

It belongs to the RNF121 family.

Its subcellular location is the endoplasmic reticulum membrane. It carries out the reaction S-ubiquitinyl-[E2 ubiquitin-conjugating enzyme]-L-cysteine + [acceptor protein]-L-lysine = [E2 ubiquitin-conjugating enzyme]-L-cysteine + N(6)-ubiquitinyl-[acceptor protein]-L-lysine.. The protein operates within protein modification; protein ubiquitination. Functionally, E3 ubiquitin ligase which accepts ubiquitin and transfers it to substrates thereby promoting their degradation by the endoplasmic reticulum-associated degradation (ERAD) pathway which is a pathway involved in ubiquitin-dependent degradation of misfolded endoplasmic reticulum proteins. May regulate the unfolded protein response to reduce endoplasmic reticulum stress. The polypeptide is E3 ubiquitin ligase Rnf121 (rnf121) (Xenopus tropicalis (Western clawed frog)).